Consider the following 359-residue polypeptide: Golgi-resident adenosine 3',5'-bisphosphate 3'-phosphatase (359 aa).

Methionine 1 carries the post-translational modification N-acetylmethionine. Residues methionine 1–glycine 12 lie on the Cytoplasmic side of the membrane. The helical transmembrane segment at valine 13–alanine 33 threads the bilayer. The Lumenal portion of the chain corresponds to glycine 34–lysine 359. The segment at glutamate 86–methionine 106 is disordered. The active-site Proton acceptor is aspartate 110. Mg(2+) is bound by residues glutamate 133, aspartate 174, leucine 176, and aspartate 177. The active-site Proton acceptor is the threonine 179. AMP-binding residues include serine 242 and histidine 245. N-linked (GlcNAc...) asparagine glycosylation occurs at asparagine 259. Positions 268 and 272 each coordinate AMP. Aspartate 300 is a binding site for Mg(2+).

The protein belongs to the inositol monophosphatase superfamily. It depends on Mg(2+) as a cofactor. In terms of processing, contains N-linked glycan resistant to endoglycosydase H.

The protein resides in the golgi apparatus. Its subcellular location is the trans-Golgi network membrane. It catalyses the reaction adenosine 3',5'-bisphosphate + H2O = AMP + phosphate. It participates in sulfur metabolism. Strongly inhibited by lithium. Its function is as follows. Exhibits 3'-nucleotidase activity toward adenosine 3',5'-bisphosphate (PAP), namely hydrolyzes adenosine 3',5'-bisphosphate into adenosine 5'-monophosphate (AMP) and a phosphate. May play a role in the formation of skeletal elements derived through endochondral ossification, possibly by clearing adenosine 3',5'-bisphosphate produced by Golgi sulfotransferases during glycosaminoglycan sulfation. Has no activity toward 3'-phosphoadenosine 5'-phosphosulfate (PAPS) or inositol phosphate (IP) substrates including I(1)P, I(1,4)P2, I(1,3,4)P3, I(1,4,5)P3 and I(1,3,4,5)P4. The sequence is that of Golgi-resident adenosine 3',5'-bisphosphate 3'-phosphatase from Homo sapiens (Human).